A 403-amino-acid polypeptide reads, in one-letter code: L-alanine/L-glutamate racemase (403 aa).

Pyridoxal 5'-phosphate-binding positions include 62 to 64 (YSN), 92 to 93 (GL), and 209 to 211 (AVT). An N6-(pyridoxal phosphate)lysine modification is found at Lys212.

Belongs to the trans-sulfuration enzymes family. As to quaternary structure, homotetramer; dimer of active dimers. Requires pyridoxal 5'-phosphate as cofactor.

The enzyme catalyses L-alanine = D-alanine. It catalyses the reaction L-glutamate = D-glutamate. It carries out the reaction L,L-cystathionine + H2O = L-homocysteine + pyruvate + NH4(+). Its pathway is cell wall biogenesis; peptidoglycan biosynthesis. Its function is as follows. Catalyzes the racemization of L-alanine to D-alanine, and of L-glutamate to D-glutamate. The activity is low, but likely physiological since W.pipientis wMel lacks canonical alr and murI genes, while D-alanine and D-glutamate are essential components of peptidoglycan. Also displays a vestigial cystathionine beta-lyase (CBL) activity, cleaving cystathionine to homocysteine and pyruvate; however, this reaction seems not to be physiologically relevant since the only met gene in the genome of this obligately intracellular parasitic bacterium is metC, demonstrating that it is a methionine auxotroph. The sequence is that of L-alanine/L-glutamate racemase from Wolbachia pipientis wMel.